A 473-amino-acid chain; its full sequence is Ribulose bisphosphate carboxylase large chain 1 (473 aa).

N116 and T166 together coordinate substrate. Catalysis depends on K168, which acts as the Proton acceptor. K170 serves as a coordination point for substrate. K194, D196, and E197 together coordinate Mg(2+). K194 is subject to N6-carboxylysine. Residue H287 is the Proton acceptor of the active site. The substrate site is built by R288, H320, and S372.

It belongs to the RuBisCO large chain family. Type I subfamily. Heterohexadecamer of 8 large chains and 8 small chains. The cofactor is Mg(2+).

It catalyses the reaction 2 (2R)-3-phosphoglycerate + 2 H(+) = D-ribulose 1,5-bisphosphate + CO2 + H2O. It carries out the reaction D-ribulose 1,5-bisphosphate + O2 = 2-phosphoglycolate + (2R)-3-phosphoglycerate + 2 H(+). RuBisCO catalyzes two reactions: the carboxylation of D-ribulose 1,5-bisphosphate, the primary event in carbon dioxide fixation, as well as the oxidative fragmentation of the pentose substrate. Both reactions occur simultaneously and in competition at the same active site. The polypeptide is Ribulose bisphosphate carboxylase large chain 1 (Acidithiobacillus ferrooxidans (strain ATCC 23270 / DSM 14882 / CIP 104768 / NCIMB 8455) (Ferrobacillus ferrooxidans (strain ATCC 23270))).